Here is a 51-residue protein sequence, read N- to C-terminus: Large ribosomal subunit protein eL39 (51 aa).

Belongs to the eukaryotic ribosomal protein eL39 family.

The protein is Large ribosomal subunit protein eL39 of Methanococcoides burtonii (strain DSM 6242 / NBRC 107633 / OCM 468 / ACE-M).